Reading from the N-terminus, the 609-residue chain is MTSATIPGLDTAPTNHQKLLSWLEEVAELTHPAQVVFADGSDEEWQQLTERLVAAGTFKKLNDEKHPNSYLALSDPSDVARVESRTFICSEREIDAGPTNNWMDPAEMRSTMTELYRGCMRGRTMWVVPFCMGPPGAEDPKLGVEITDSEYVVASMKVMTRMGTSALEKIGDDGFFVKALHSVGAPLQPGQQDMPWPCNETKYITHFPETREIWSYGSGYGGNALLGKKCYSLRIASAMAHDEGWLAEHMLILKLISPENKAYYFAAAFPSACGKTNLAMLQPTIPGWRAETLGDDIAWMRFGKDGRLYAVNPEFGFFGVAPGTNWKSNPNAMRTIAAGNTVFTNVALTDDNDVWWEGLEGEPAHLIDWKGNDWYAGKTETPAAHSNSRYCTPMSQCPILAPEWDDPRGVPISVILFGARRKTTVPLVTQARNWQHGVFMGATMGSEQTAAAEGKVGTVRRDPMAMLPFMGYHVGDYFQHWIDLGKHSDESNLPKVFFVNWFRRGEGGKFLWPGFGENSRVLKWIVDRIEHKAGGQDTLIGIVPTATDLDLDGLDISSDDVAKALAVDPAEWRNELPLIEEWFEFVGDKLPSGMQDEFEALKQRLAKED.

Residues Arg81 and 220-222 (YGG) contribute to the substrate site. The Mn(2+) site is built by Lys229 and His249. A substrate-binding site is contributed by Ser271. A GTP-binding site is contributed by 272 to 277 (ACGKTN). Residue Cys273 is part of the active site. Residue Asp296 participates in Mn(2+) binding. 387–389 (NSR) is a binding site for substrate. GTP is bound by residues Arg389, Arg420, and 515–518 (FGEN).

It belongs to the phosphoenolpyruvate carboxykinase [GTP] family. Monomer. The cofactor is Mn(2+).

It localises to the cytoplasm. It carries out the reaction oxaloacetate + GTP = phosphoenolpyruvate + GDP + CO2. Its pathway is carbohydrate biosynthesis; gluconeogenesis. Catalyzes the conversion of oxaloacetate (OAA) to phosphoenolpyruvate (PEP), the rate-limiting step in the metabolic pathway that produces glucose from lactate and other precursors derived from the citric acid cycle. This chain is Phosphoenolpyruvate carboxykinase [GTP], found in Mycobacterium leprae (strain Br4923).